The sequence spans 541 residues: Pseudokinase FAM20A (541 aa).

The first 33 residues, 1–33 (MPGLRRDRLLTLLLLGALLSADLYFHLWPQVQR), serve as a signal peptide directing secretion. Residues 38–90 (RERPRGCPCTGRASSLARDSAAAASDPGTIVHNFSRTEPRTEPAGGSHSGSSS) form a disordered region. The span at 49–63 (RASSLARDSAAAASD) shows a compositional bias: low complexity. N-linked (GlcNAc...) asparagine glycosylation is found at Asn-70, Asn-145, and Asn-287. Disulfide bonds link Cys-314–Cys-330, Cys-319–Cys-323, Cys-378–Cys-452, and Cys-453–Cys-512. N-linked (GlcNAc...) asparagine glycosylation is present at Asn-388. N-linked (GlcNAc...) asparagine glycosylation occurs at Asn-538.

The protein belongs to the FAM20 family. Interacts with FAM20C; probably forming a heterotetramer of 2 subunits of FAM20A and 2 subunits of FAM20C. In terms of processing, N-glycosylated. In terms of tissue distribution, highly expressed in lung and liver. Intermediate levels in thymus and ovary.

It is found in the secreted. The protein resides in the golgi apparatus. Its subcellular location is the endoplasmic reticulum. In terms of biological role, pseudokinase that acts as an allosteric activator of the Golgi serine/threonine protein kinase FAM20C and is involved in biomineralization of teeth. Forms a complex with FAM20C and increases the ability of FAM20C to phosphorylate the proteins that form the 'matrix' that guides the deposition of the enamel minerals. The protein is Pseudokinase FAM20A of Homo sapiens (Human).